Consider the following 450-residue polypeptide: Chromosomal replication initiator protein DnaA (450 aa).

The tract at residues 1-79 is domain I, interacts with DnaA modulators; that stretch reads MKDSYFDLNT…MEYAYDVAHD (79 aa). The tract at residues 79–112 is domain II; the sequence is DFFKPELKVIKVVANPVNNQKSNQSNSDFVATDY. Residues 113–329 form a domain III, AAA+ region region; the sequence is QLNQNFTFDT…GAFNTLTLMA (217 aa). ATP contacts are provided by G157, G159, K160, and T161. The interval 330–450 is domain IV, binds dsDNA; the sequence is RAGRPINVSN…NLSTKIKEKS (121 aa).

It belongs to the DnaA family. In terms of assembly, oligomerizes as a right-handed, spiral filament on DNA at oriC.

It localises to the cytoplasm. Functionally, plays an essential role in the initiation and regulation of chromosomal replication. ATP-DnaA binds to the origin of replication (oriC) to initiate formation of the DNA replication initiation complex once per cell cycle. Binds the DnaA box (a 9 base pair repeat at the origin) and separates the double-stranded (ds)DNA. Forms a right-handed helical filament on oriC DNA; dsDNA binds to the exterior of the filament while single-stranded (ss)DNA is stabiized in the filament's interior. The ATP-DnaA-oriC complex binds and stabilizes one strand of the AT-rich DNA unwinding element (DUE), permitting loading of DNA polymerase. After initiation quickly degrades to an ADP-DnaA complex that is not apt for DNA replication. Binds acidic phospholipids. In Oenococcus oeni (strain ATCC BAA-331 / PSU-1), this protein is Chromosomal replication initiator protein DnaA.